We begin with the raw amino-acid sequence, 475 residues long: ATP synthase subunit beta (475 aa).

152–159 (GGAGVGKT) provides a ligand contact to ATP.

This sequence belongs to the ATPase alpha/beta chains family. F-type ATPases have 2 components, CF(1) - the catalytic core - and CF(0) - the membrane proton channel. CF(1) has five subunits: alpha(3), beta(3), gamma(1), delta(1), epsilon(1). CF(0) has three main subunits: a(1), b(2) and c(9-12). The alpha and beta chains form an alternating ring which encloses part of the gamma chain. CF(1) is attached to CF(0) by a central stalk formed by the gamma and epsilon chains, while a peripheral stalk is formed by the delta and b chains.

The protein resides in the cell inner membrane. The catalysed reaction is ATP + H2O + 4 H(+)(in) = ADP + phosphate + 5 H(+)(out). Its function is as follows. Produces ATP from ADP in the presence of a proton gradient across the membrane. The catalytic sites are hosted primarily by the beta subunits. The protein is ATP synthase subunit beta of Wolbachia sp. subsp. Drosophila simulans (strain wRi).